A 215-amino-acid polypeptide reads, in one-letter code: Proteasome subunit beta (215 aa).

Positions 1 to 12 (MLGEIQDKVYKG) are cleaved as a propeptide — removed in mature form; by autocatalysis. The active-site Nucleophile is the threonine 13.

It belongs to the peptidase T1B family. The 20S proteasome core is composed of 14 alpha and 14 beta subunits that assemble into four stacked heptameric rings, resulting in a barrel-shaped structure. The two inner rings, each composed of seven catalytic beta subunits, are sandwiched by two outer rings, each composed of seven alpha subunits. The catalytic chamber with the active sites is on the inside of the barrel. Has a gated structure, the ends of the cylinder being occluded by the N-termini of the alpha-subunits. Is capped at one or both ends by the proteasome regulatory ATPase, PAN.

The protein localises to the cytoplasm. The enzyme catalyses Cleavage of peptide bonds with very broad specificity.. The formation of the proteasomal ATPase PAN-20S proteasome complex, via the docking of the C-termini of PAN into the intersubunit pockets in the alpha-rings, triggers opening of the gate for substrate entry. Interconversion between the open-gate and close-gate conformations leads to a dynamic regulation of the 20S proteasome proteolysis activity. In terms of biological role, component of the proteasome core, a large protease complex with broad specificity involved in protein degradation. In Archaeoglobus profundus (strain DSM 5631 / JCM 9629 / NBRC 100127 / Av18), this protein is Proteasome subunit beta.